Consider the following 127-residue polypeptide: uncharacterized protein (127 aa).

Position 30 is a phosphothreonine (Thr30). The segment at 51 to 75 (APTYEQVLYPPASQKKTSNSTSEES) is disordered. Phosphoserine is present on Ser63.

This is an uncharacterized protein from Mus musculus (Mouse).